Reading from the N-terminus, the 155-residue chain is RNA pyrophosphohydrolase (155 aa).

The region spanning 5–147 (RYRPNVAAIV…KRPVYKKVLE (143 aa)) is the Nudix hydrolase domain. The short motif at 42-63 (GGIDKGESPKEALLRELKEEIG) is the Nudix box element.

The protein belongs to the Nudix hydrolase family. RppH subfamily. Requires a divalent metal cation as cofactor.

In terms of biological role, accelerates the degradation of transcripts by removing pyrophosphate from the 5'-end of triphosphorylated RNA, leading to a more labile monophosphorylated state that can stimulate subsequent ribonuclease cleavage. This is RNA pyrophosphohydrolase from Nitratiruptor sp. (strain SB155-2).